The sequence spans 244 residues: Small ribosomal subunit protein uS2 (244 aa).

This sequence belongs to the universal ribosomal protein uS2 family.

The sequence is that of Small ribosomal subunit protein uS2 from Hydrogenovibrio crunogenus (strain DSM 25203 / XCL-2) (Thiomicrospira crunogena).